Reading from the N-terminus, the 282-residue chain is MHCSSPKMVCETKIVADEHEAIAGTKKDSIIVSSSQMWTSSSASPSALESKIEKRNQVFIREFERSDHEEVRRIFNEGIMERIPNSAFRGLKQQTTTQFMYAFLTVMCYVMTKSFTLTFCAPFILMGARYYYSRKVILSYLDCALHTDMADIEAYYMKPTGSCFWVAVLQGQVVGIVAAQSREDDNTVELRRMSVDSHFRGKGIAKALGRRVIEFAMLNNYSAVVLGTTAVKMAAHKLYESLGFRRVGETEDYTLPGMTRSPLERLFFQIRYSHYRLQLHEE.

Residues 103–125 (FLTVMCYVMTKSFTLTFCAPFIL) form a helical membrane-spanning segment. The N-acetyltransferase domain occupies 110-269 (VMTKSFTLTF…RSPLERLFFQ (160 aa)).

The protein belongs to the NAT8 family.

It localises to the cytoplasm. It is found in the microsome membrane. The protein localises to the mitochondrion membrane. Its subcellular location is the endoplasmic reticulum membrane. The enzyme catalyses L-aspartate + acetyl-CoA = N-acetyl-L-aspartate + CoA + H(+). In terms of biological role, catalyzes the synthesis of N-acetylaspartate acid (NAA) from L-aspartate and acetyl-CoA. This Danio rerio (Zebrafish) protein is N-acetylaspartate synthetase (nat8l).